The sequence spans 474 residues: Aspartyl/glutamyl-tRNA(Asn/Gln) amidotransferase subunit B (474 aa).

The protein belongs to the GatB/GatE family. GatB subfamily. Heterotrimer of A, B and C subunits.

The catalysed reaction is L-glutamyl-tRNA(Gln) + L-glutamine + ATP + H2O = L-glutaminyl-tRNA(Gln) + L-glutamate + ADP + phosphate + H(+). It catalyses the reaction L-aspartyl-tRNA(Asn) + L-glutamine + ATP + H2O = L-asparaginyl-tRNA(Asn) + L-glutamate + ADP + phosphate + 2 H(+). Functionally, allows the formation of correctly charged Asn-tRNA(Asn) or Gln-tRNA(Gln) through the transamidation of misacylated Asp-tRNA(Asn) or Glu-tRNA(Gln) in organisms which lack either or both of asparaginyl-tRNA or glutaminyl-tRNA synthetases. The reaction takes place in the presence of glutamine and ATP through an activated phospho-Asp-tRNA(Asn) or phospho-Glu-tRNA(Gln). The polypeptide is Aspartyl/glutamyl-tRNA(Asn/Gln) amidotransferase subunit B (Lactiplantibacillus plantarum (strain ATCC BAA-793 / NCIMB 8826 / WCFS1) (Lactobacillus plantarum)).